The primary structure comprises 436 residues: Proteasome-activating nucleotidase (436 aa).

A coiled-coil region spans residues 15–97 (EELCRLYRSL…LKSESEQLRS (83 aa)). ATP is bound by residues 222–227 (GTGKTL) and His-361. The docks into pockets in the proteasome alpha-ring to cause gate opening stretch occupies residues 434–436 (MFA).

It belongs to the AAA ATPase family. In terms of assembly, homohexamer. The hexameric complex has a two-ring architecture resembling a top hat that caps the 20S proteasome core at one or both ends. Upon ATP-binding, the C-terminus of PAN interacts with the alpha-rings of the proteasome core by binding to the intersubunit pockets.

It is found in the cytoplasm. ATPase which is responsible for recognizing, binding, unfolding and translocation of substrate proteins into the archaeal 20S proteasome core particle. Is essential for opening the gate of the 20S proteasome via an interaction with its C-terminus, thereby allowing substrate entry and access to the site of proteolysis. Thus, the C-termini of the proteasomal ATPase function like a 'key in a lock' to induce gate opening and therefore regulate proteolysis. Unfolding activity requires energy from ATP hydrolysis, whereas ATP binding alone promotes ATPase-20S proteasome association which triggers gate opening, and supports translocation of unfolded substrates. The protein is Proteasome-activating nucleotidase of Methanoregula boonei (strain DSM 21154 / JCM 14090 / 6A8).